The primary structure comprises 70 residues: DNA-directed RNA polymerase subunit omega (70 aa).

It belongs to the RNA polymerase subunit omega family. In terms of assembly, in cyanobacteria the RNAP catalytic core is composed of 2 alpha, 1 beta, 1 beta', 1 gamma and 1 omega subunit. When a sigma factor is associated with the core the holoenzyme is formed, which can initiate transcription.

It carries out the reaction RNA(n) + a ribonucleoside 5'-triphosphate = RNA(n+1) + diphosphate. Functionally, promotes RNA polymerase assembly. Latches the N- and C-terminal regions of the beta' subunit thereby facilitating its interaction with the beta and alpha subunits. This Prochlorococcus marinus (strain NATL1A) protein is DNA-directed RNA polymerase subunit omega.